Reading from the N-terminus, the 73-residue chain is Translation initiation factor IF-1 (73 aa).

Residues 1–73 enclose the S1-like domain; that stretch reads MANKEELIEF…TKGRITYRAR (73 aa).

Belongs to the IF-1 family. As to quaternary structure, component of the 30S ribosomal translation pre-initiation complex which assembles on the 30S ribosome in the order IF-2 and IF-3, IF-1 and N-formylmethionyl-tRNA(fMet); mRNA recruitment can occur at any time during PIC assembly.

Its subcellular location is the cytoplasm. One of the essential components for the initiation of protein synthesis. Stabilizes the binding of IF-2 and IF-3 on the 30S subunit to which N-formylmethionyl-tRNA(fMet) subsequently binds. Helps modulate mRNA selection, yielding the 30S pre-initiation complex (PIC). Upon addition of the 50S ribosomal subunit IF-1, IF-2 and IF-3 are released leaving the mature 70S translation initiation complex. The polypeptide is Translation initiation factor IF-1 (Acinetobacter baumannii (strain ATCC 17978 / DSM 105126 / CIP 53.77 / LMG 1025 / NCDC KC755 / 5377)).